The chain runs to 149 residues: Calmodulin-2 (149 aa).

Position 2 is an N-acetylalanine (Ala2). 4 EF-hand domains span residues 8-43 (EQIA…LGQN), 44-79 (PTEA…KMKD), 81-116 (DSEE…LGEK), and 117-149 (LTDE…MTSK). Ca(2+)-binding residues include Asp21, Asp23, Asp25, Thr27, Glu32, Asp57, Asp59, Asn61, Thr63, Glu68, Asp94, Asp96, Asn98, and Glu105. Lys116 is subject to N6,N6,N6-trimethyllysine. Ca(2+) contacts are provided by Asp130, Asp132, Asp134, Gln136, and Glu141.

This sequence belongs to the calmodulin family.

Calmodulin mediates the control of a large number of enzymes, ion channels and other proteins by Ca(2+). Among the enzymes to be stimulated by the calmodulin-Ca(2+) complex are a number of protein kinases and phosphatases. This Branchiostoma lanceolatum (Common lancelet) protein is Calmodulin-2 (CAM2).